We begin with the raw amino-acid sequence, 370 residues long: MAFRRRTKSYPLFSQEFIIHNHADIGFCLVLCVLIGLMFEVTAKTAFLFILPQYNISVPTADSETVHYHYGPKDLVTILFYVVITIIFHAVVQEYILDKISKRLHLSKVKHSKFNESGQLLVFHLSAVAWCFYVIVTEGYLTNPRSLWEDYPHVYLSFQVKFFYLGQLAYWLHSLPELYFQKVRKEEVPRQLQYICLYLLHITGAYLLNLSRLGLILLLLQYSTEALFHMARLFHFADENNERLFNAWAAVFGVTRLFILTLAVLTIGFGLARVENQVFDPEKGNFNTLPCRLGMLLLVCVAQAWLMWRFIHSQLRHWREYWKEQSAKRRVSAVPRPPAKLLKREPGYHENGVVKAENGTSSRTKKLKSP.

Residues 1–22 (MAFRRRTKSYPLFSQEFIIHNH) lie on the Cytoplasmic side of the membrane. Residues 23-43 (ADIGFCLVLCVLIGLMFEVTA) traverse the membrane as a helical segment. Residues 44–75 (KTAFLFILPQYNISVPTADSETVHYHYGPKDL) are Extracellular-facing. N-linked (GlcNAc...) asparagine glycosylation occurs at N55. A helical membrane pass occupies residues 76–96 (VTILFYVVITIIFHAVVQEYI). The Cytoplasmic segment spans residues 97–119 (LDKISKRLHLSKVKHSKFNESGQ). The TLC domain maps to 112-321 (SKFNESGQLL…HSQLRHWREY (210 aa)). A helical transmembrane segment spans residues 120 to 140 (LLVFHLSAVAWCFYVIVTEGY). The Extracellular segment spans residues 141-159 (LTNPRSLWEDYPHVYLSFQ). The helical transmembrane segment at 160–180 (VKFFYLGQLAYWLHSLPELYF) threads the bilayer. Over 181–191 (QKVRKEEVPRQ) the chain is Cytoplasmic. The helical transmembrane segment at 192–209 (LQYICLYLLHITGAYLLN) threads the bilayer. Over 210 to 214 (LSRLG) the chain is Extracellular. A helical transmembrane segment spans residues 215–235 (LILLLLQYSTEALFHMARLFH). Residues 236 to 250 (FADENNERLFNAWAA) are Cytoplasmic-facing. The chain crosses the membrane as a helical span at residues 251–271 (VFGVTRLFILTLAVLTIGFGL). Topologically, residues 272–287 (ARVENQVFDPEKGNFN) are extracellular. The chain crosses the membrane as a helical span at residues 288–308 (TLPCRLGMLLLVCVAQAWLMW). Topologically, residues 309–370 (RFIHSQLRHW…SSRTKKLKSP (62 aa)) are cytoplasmic. The tract at residues 332-370 (SAVPRPPAKLLKREPGYHENGVVKAENGTSSRTKKLKSP) is disordered.

The protein belongs to the TRAM family. As to quaternary structure, interacts with COL1A1. Interacts with SERCA2B.

The protein resides in the membrane. Its function is as follows. Necessary for collagen type I synthesis. May couple the activity of the ER Ca(2+) pump SERCA2B with the activity of the translocon. This coupling may increase the local Ca(2+) concentration at the site of collagen synthesis, and a high Ca(2+) concentration may be necessary for the function of molecular chaperones involved in collagen folding. Required for proper insertion of the first transmembrane helix N-terminus of TM4SF20 into the ER lumen, may act as a ceramide sensor for regulated alternative translocation (RAT). The polypeptide is Translocating chain-associated membrane protein 2 (Tram2) (Mus musculus (Mouse)).